A 323-amino-acid polypeptide reads, in one-letter code: Oxidation resistance protein 1 (323 aa).

Polar residues-rich tracts occupy residues 1 to 14 and 40 to 49; these read MVTD…SSLV and RQTSPSSMEY. The interval 1-81 is disordered; it reads MVTDKTNASS…SLPPLSQLSL (81 aa). The span at 51-69 shows a compositional bias: basic and acidic residues; that stretch reads ESDKKKDGPMENEQSKGVR. Over residues 71 to 81 the composition is skewed to low complexity; it reads SSLPPLSQLSL. In terms of domain architecture, TLDc spans 91–320; that stretch reads RLLDDELASN…IMGLELWRVG (230 aa).

This sequence belongs to the OXR1 family.

The protein resides in the mitochondrion. Functionally, may be involved in protection from oxidative damage. In Debaryomyces hansenii (strain ATCC 36239 / CBS 767 / BCRC 21394 / JCM 1990 / NBRC 0083 / IGC 2968) (Yeast), this protein is Oxidation resistance protein 1 (OXR1).